We begin with the raw amino-acid sequence, 95 residues long: Small ribosomal subunit protein bS6 (95 aa).

Belongs to the bacterial ribosomal protein bS6 family.

Its function is as follows. Binds together with bS18 to 16S ribosomal RNA. The protein is Small ribosomal subunit protein bS6 of Corynebacterium kroppenstedtii (strain DSM 44385 / JCM 11950 / CIP 105744 / CCUG 35717).